The chain runs to 192 residues: Large ribosomal subunit protein bL25 (192 aa).

This sequence belongs to the bacterial ribosomal protein bL25 family. CTC subfamily. As to quaternary structure, part of the 50S ribosomal subunit; part of the 5S rRNA/L5/L18/L25 subcomplex. Contacts the 5S rRNA. Binds to the 5S rRNA independently of L5 and L18.

This is one of the proteins that binds to the 5S RNA in the ribosome where it forms part of the central protuberance. This Solidesulfovibrio magneticus (strain ATCC 700980 / DSM 13731 / RS-1) (Desulfovibrio magneticus) protein is Large ribosomal subunit protein bL25.